Reading from the N-terminus, the 91-residue chain is Large ribosomal subunit protein bL27 (91 aa).

Belongs to the bacterial ribosomal protein bL27 family.

This is Large ribosomal subunit protein bL27 from Chromobacterium violaceum (strain ATCC 12472 / DSM 30191 / JCM 1249 / CCUG 213 / NBRC 12614 / NCIMB 9131 / NCTC 9757 / MK).